The sequence spans 390 residues: MTDVAPPAGVLDVPTDSVGVVTPQRMHFSEPLQLRNGSQIADYDLMVETYGTLNAARTNAVLVCHALNASHHVAGIAADNPRDIGWWDNMVGPGKPLDTNRFFVIGVNNLGSCFGSTGPMSTNPSTGAPYGALFPVVTVEDWVNAQARVADIFGIQQFAAVMGGSLGGMQALAWSLMYPERLRHCIVVASTPKLSAQNIAFNEVARSSILSDPDFHGGNYYAHNVKPKRGLRVARMIGHITYLSDEDMAEKFGRSLKAEDIRFSFDVEFQVESYLRYQGDKFAEYFDANTYLLITRALDYFDPALAHGGDLTRAMAQTQAGFLVVSFTTDWRFAPNRSREIVKALLDNKRPVSYAEIDAPHGHDAFLLDDARYHNLMRAYYDRIAEEIGA.

The 311-residue stretch at 59-369 (NAVLVCHALN…PHGHDAFLLD (311 aa)) folds into the AB hydrolase-1 domain. The Nucleophile role is filled by Ser165. Residue Arg235 participates in substrate binding. Active-site residues include Asp330 and His363. Asp364 serves as a coordination point for substrate.

This sequence belongs to the AB hydrolase superfamily. MetX family. As to quaternary structure, homodimer.

It is found in the cytoplasm. The enzyme catalyses L-homoserine + succinyl-CoA = O-succinyl-L-homoserine + CoA. The protein operates within amino-acid biosynthesis; L-methionine biosynthesis via de novo pathway; O-succinyl-L-homoserine from L-homoserine: step 1/1. Its function is as follows. Transfers a succinyl group from succinyl-CoA to L-homoserine, forming succinyl-L-homoserine. The chain is Homoserine O-succinyltransferase from Cupriavidus metallidurans (strain ATCC 43123 / DSM 2839 / NBRC 102507 / CH34) (Ralstonia metallidurans).